Reading from the N-terminus, the 229-residue chain is Heptaprenylglyceryl phosphate synthase (229 aa).

Lys12 serves as a coordination point for sn-glycerol 1-phosphate. Asp14 and Thr40 together coordinate Mg(2+). Sn-glycerol 1-phosphate is bound by residues 159 to 164, Gly189, and 209 to 210; these read YIEYSG and GN.

It belongs to the GGGP/HepGP synthase family. Group I subfamily. As to quaternary structure, homodimer. It depends on Mg(2+) as a cofactor.

The enzyme catalyses sn-glycerol 1-phosphate + all-trans-heptaprenyl diphosphate = 3-heptaprenyl-sn-glycero-1-phosphate + diphosphate. It functions in the pathway membrane lipid metabolism; glycerophospholipid metabolism. In terms of biological role, prenyltransferase that catalyzes in vivo the transfer of the heptaprenyl moiety of heptaprenyl pyrophosphate (HepPP; 35 carbon atoms) to the C3 hydroxyl of sn-glycerol-1-phosphate (G1P), producing heptaprenylglyceryl phosphate (HepGP). This reaction is an ether-bond-formation step in the biosynthesis of archaea-type G1P-based membrane lipids found in Bacillales. The protein is Heptaprenylglyceryl phosphate synthase of Staphylococcus saprophyticus subsp. saprophyticus (strain ATCC 15305 / DSM 20229 / NCIMB 8711 / NCTC 7292 / S-41).